We begin with the raw amino-acid sequence, 317 residues long: Ribosomal protein L11 methyltransferase (317 aa).

Thr158, Gly179, Asp201, and Asn244 together coordinate S-adenosyl-L-methionine.

Belongs to the methyltransferase superfamily. PrmA family.

The protein resides in the cytoplasm. It carries out the reaction L-lysyl-[protein] + 3 S-adenosyl-L-methionine = N(6),N(6),N(6)-trimethyl-L-lysyl-[protein] + 3 S-adenosyl-L-homocysteine + 3 H(+). Functionally, methylates ribosomal protein L11. The sequence is that of Ribosomal protein L11 methyltransferase from Streptococcus pyogenes serotype M4 (strain MGAS10750).